The primary structure comprises 231 residues: 7-cyano-7-deazaguanine synthase (231 aa).

8–18 contributes to the ATP binding site; the sequence is FSGGQDSTTCL. The Zn(2+) site is built by Cys-188, Cys-197, Cys-200, and Cys-203.

The protein belongs to the QueC family. The cofactor is Zn(2+).

The catalysed reaction is 7-carboxy-7-deazaguanine + NH4(+) + ATP = 7-cyano-7-deazaguanine + ADP + phosphate + H2O + H(+). It functions in the pathway purine metabolism; 7-cyano-7-deazaguanine biosynthesis. In terms of biological role, catalyzes the ATP-dependent conversion of 7-carboxy-7-deazaguanine (CDG) to 7-cyano-7-deazaguanine (preQ(0)). The protein is 7-cyano-7-deazaguanine synthase of Salmonella paratyphi A (strain ATCC 9150 / SARB42).